Reading from the N-terminus, the 397-residue chain is MALRVTRNTRLASSENQGALPGKAAVANKPGLRPRAALGEIGNNPQTRQALRKKEVKVAPKVEAVAEKAPVVQQPKKESPKVQHDVQILSEPSSPVPMETSGCASDDLCQAFSDVMLNIKDVDADDYDNPMLCSEYVKDIYLYLRQLEIEQAVRPKYLEGSEVTGNMRAILIDWLVQVQIKFKLLQETMYMTVAVIDRFLQDHPVPKKQLQLVGVTAMFIASKYEEMYPPEIADFAFVTDRAYTTGQIRDMEMKILRVLDFSFGKPLPLQFLRRASKIGDVTAEHHTLAKYFLELTMVDYDMVHFPPSQVASARYALTLKVFNCGDWTPTLQHYMGYTEDSLVPVMQHIARNVVRVNEGLSKHLAVKNKYSSQKQMRIASISQLKSSLIKDLAKQIS.

A compositionally biased stretch (polar residues) spans 1–17 (MALRVTRNTRLASSENQ). The segment at 1-30 (MALRVTRNTRLASSENQGALPGKAAVANKP) is disordered.

It belongs to the cyclin family. Cyclin AB subfamily. In terms of assembly, interacts with the CDK1 protein kinase to form a serine/threonine kinase holoenzyme complex also known as maturation promoting factor (MPF). The cyclin subunit imparts substrate specificity to the complex.

Its function is as follows. Essential for the control of the cell cycle at the G2/M (mitosis) transition. The sequence is that of G2/mitotic-specific cyclin-B1 (ccnb1) from Carassius auratus (Goldfish).